Here is a 170-residue protein sequence, read N- to C-terminus: Peptide deformylase (170 aa).

The Fe cation site is built by Cys-94 and His-136. Glu-137 is an active-site residue. His-140 contacts Fe cation.

It belongs to the polypeptide deformylase family. The cofactor is Fe(2+).

The enzyme catalyses N-terminal N-formyl-L-methionyl-[peptide] + H2O = N-terminal L-methionyl-[peptide] + formate. Functionally, removes the formyl group from the N-terminal Met of newly synthesized proteins. Requires at least a dipeptide for an efficient rate of reaction. N-terminal L-methionine is a prerequisite for activity but the enzyme has broad specificity at other positions. The sequence is that of Peptide deformylase from Xylella fastidiosa (strain 9a5c).